Reading from the N-terminus, the 306-residue chain is Glutaminase (306 aa).

Substrate-binding residues include S64, N115, E159, N166, Y190, Y242, and V260.

Belongs to the glutaminase family. As to quaternary structure, homotetramer.

It catalyses the reaction L-glutamine + H2O = L-glutamate + NH4(+). The polypeptide is Glutaminase (Vibrio cholerae serotype O1 (strain ATCC 39541 / Classical Ogawa 395 / O395)).